The chain runs to 144 residues: Large ribosomal subunit protein uL15 (144 aa).

A disordered region spans residues 1–48 (MRLNTLSPAAGSKSAAKRVGRGIGSGTGKTCGRGHKGQKSRSGGGVRI). A compositionally biased stretch (gly residues) spans 21 to 31 (RGIGSGTGKTC).

This sequence belongs to the universal ribosomal protein uL15 family. As to quaternary structure, part of the 50S ribosomal subunit.

In terms of biological role, binds to the 23S rRNA. This is Large ribosomal subunit protein uL15 from Shewanella woodyi (strain ATCC 51908 / MS32).